Reading from the N-terminus, the 234-residue chain is MHQSKEERVHRVFEKISAHYDRMNSVISFRRHLKWREDVMRRMNVQKGKRALDVCCGTADWAIALAEAVGPEGEVYGLDFSENMLKVGEQKVKARGLGNVKLIHGNAMQLPFPDNSFDYVTIGFGLRNVPDYMTVLKEMHRVTKPGGMTVCLETSQPTLFGFRQLYYFYFRFIMPLFGKLLAKSYEEYSWLQESAREFPGRDELAEMFREAGFVDVEVKPYTFGVAAMHLGYKR.

Residues Thr58, Asp79, and 106–107 (NA) each bind S-adenosyl-L-methionine.

This sequence belongs to the class I-like SAM-binding methyltransferase superfamily. MenG/UbiE family.

It catalyses the reaction a 2-demethylmenaquinol + S-adenosyl-L-methionine = a menaquinol + S-adenosyl-L-homocysteine + H(+). Its pathway is quinol/quinone metabolism; menaquinone biosynthesis; menaquinol from 1,4-dihydroxy-2-naphthoate: step 2/2. Its function is as follows. Methyltransferase required for the conversion of demethylmenaquinol (DMKH2) to menaquinol (MKH2). The protein is Demethylmenaquinone methyltransferase of Geobacillus kaustophilus (strain HTA426).